The primary structure comprises 466 residues: D-inositol 3-phosphate glycosyltransferase (466 aa).

The span at 1–12 shows a compositional bias: low complexity; that stretch reads MRPMRAGAGAAG. The segment at 1–22 is disordered; it reads MRPMRAGAGAAGESCKDDGVRP. His-43 serves as a coordination point for 1D-myo-inositol 3-phosphate. UDP-N-acetyl-alpha-D-glucosamine-binding positions include 49-50 and Gly-57; that span reads QP. 1D-myo-inositol 3-phosphate-binding positions include 54 to 59, Lys-112, Tyr-145, Thr-169, and Arg-189; that span reads DAGGMN. Residues Arg-263, Lys-268, and Gln-321 each coordinate UDP-N-acetyl-alpha-D-glucosamine. Mg(2+) is bound by residues Phe-330, His-331, and Val-333. Residues Glu-343 and Glu-351 each coordinate UDP-N-acetyl-alpha-D-glucosamine. Thr-357 lines the Mg(2+) pocket. A disordered region spans residues 446 to 466; it reads VRDPVAARKPRRWTARRGVGA.

Belongs to the glycosyltransferase group 1 family. MshA subfamily. In terms of assembly, homodimer.

The enzyme catalyses 1D-myo-inositol 3-phosphate + UDP-N-acetyl-alpha-D-glucosamine = 1D-myo-inositol 2-acetamido-2-deoxy-alpha-D-glucopyranoside 3-phosphate + UDP + H(+). Catalyzes the transfer of a N-acetyl-glucosamine moiety to 1D-myo-inositol 3-phosphate to produce 1D-myo-inositol 2-acetamido-2-deoxy-glucopyranoside 3-phosphate in the mycothiol biosynthesis pathway. The sequence is that of D-inositol 3-phosphate glycosyltransferase from Mycobacterium marinum (strain ATCC BAA-535 / M).